A 199-amino-acid polypeptide reads, in one-letter code: Thymidylate kinase (199 aa).

Residue 7–14 participates in ATP binding; that stretch reads GTEGVGKT.

This sequence belongs to the thymidylate kinase family.

It catalyses the reaction dTMP + ATP = dTDP + ADP. Functionally, phosphorylation of dTMP to form dTDP in both de novo and salvage pathways of dTTP synthesis. This Acinetobacter baumannii (strain ATCC 17978 / DSM 105126 / CIP 53.77 / LMG 1025 / NCDC KC755 / 5377) protein is Thymidylate kinase.